We begin with the raw amino-acid sequence, 320 residues long: Apolipoprotein E (320 aa).

Residues 1–18 (MKVLWAALLVAFLAGCQG) form the signal peptide. 8 tandem repeats follow at residues 82–103 (ALMD…EQLS), 104–125 (PVAE…ARLG), 126–147 (ADME…AMLG), 148–169 (QSTE…KRLL), 170–191 (RDVD…EGAE), 192–213 (RGVS…ARAA), 214–236 (TVGS…ERLR), and 237–258 (ARME…EQVE). The interval 82-258 (ALMDETMKEL…RLDEVKEQVE (177 aa)) is 8 X 22 AA approximate tandem repeats. Residue M145 is modified to Methionine sulfoxide. At S149 the chain carries Phosphoserine. The tract at residues 160-170 (HLRKLRKRLLR) is LDL and other lipoprotein receptors binding. 164–167 (LRKR) provides a ligand contact to heparin. Positions 212-293 (AATVGSSLAG…SWFEPLVEDM (82 aa)) are lipid-binding and lipoprotein association. Residue 232-239 (GERLRARM) coordinates heparin. The homooligomerization stretch occupies residues 269–320 (QQMRLQAEAFQARLKSWFEPLVEDMQRQWAGLVEKVQAAVGASAAPVPSDNH). The tract at residues 281-293 (RLKSWFEPLVEDM) is specificity for association with VLDL.

This sequence belongs to the apolipoprotein A1/A4/E family. As to quaternary structure, homotetramer. May interact with ABCA1; functionally associated with ABCA1 in the biogenesis of HDLs. May interact with APP/A4 amyloid-beta peptide; the interaction is extremely stable in vitro but its physiological significance is unclear. May interact with MAPT. May interact with MAP2. In the cerebrospinal fluid, interacts with secreted SORL1. Interacts with PMEL; this allows the loading of PMEL luminal fragment on ILVs to induce fibril nucleation. Post-translationally, APOE exists as multiple glycosylated and sialylated glycoforms within cells and in plasma. The extent of glycosylation and sialylation are tissue and context specific. Glycated in plasma VLDL. In terms of processing, phosphorylated by FAM20C in the extracellular medium.

It localises to the secreted. It is found in the extracellular space. Its subcellular location is the extracellular matrix. The protein resides in the extracellular vesicle. The protein localises to the endosome. It localises to the multivesicular body. Its function is as follows. APOE is an apolipoprotein, a protein associating with lipid particles, that mainly functions in lipoprotein-mediated lipid transport between organs via the plasma and interstitial fluids. APOE is a core component of plasma lipoproteins and is involved in their production, conversion and clearance. Apolipoproteins are amphipathic molecules that interact both with lipids of the lipoprotein particle core and the aqueous environment of the plasma. As such, APOE associates with chylomicrons, chylomicron remnants, very low density lipoproteins (VLDL) and intermediate density lipoproteins (IDL) but shows a preferential binding to high-density lipoproteins (HDL). It also binds a wide range of cellular receptors including the LDL receptor/LDLR, the LDL receptor-related proteins LRP1, LRP2 and LRP8 and the very low-density lipoprotein receptor/VLDLR that mediate the cellular uptake of the APOE-containing lipoprotein particles. Finally, APOE also has a heparin-binding activity and binds heparan-sulfate proteoglycans on the surface of cells, a property that supports the capture and the receptor-mediated uptake of APOE-containing lipoproteins by cells. A main function of APOE is to mediate lipoprotein clearance through the uptake of chylomicrons, VLDLs, and HDLs by hepatocytes. APOE is also involved in the biosynthesis by the liver of VLDLs as well as their uptake by peripheral tissues ensuring the delivery of triglycerides and energy storage in muscle, heart and adipose tissues. By participating in the lipoprotein-mediated distribution of lipids among tissues, APOE plays a critical role in plasma and tissues lipid homeostasis. APOE is also involved in two steps of reverse cholesterol transport, the HDLs-mediated transport of cholesterol from peripheral tissues to the liver, and thereby plays an important role in cholesterol homeostasis. First, it is functionally associated with ABCA1 in the biogenesis of HDLs in tissues. Second, it is enriched in circulating HDLs and mediates their uptake by hepatocytes. APOE also plays an important role in lipid transport in the central nervous system, regulating neuron survival and sprouting. This chain is Apolipoprotein E (APOE), found in Plecturocebus moloch (Dusky titi monkey).